Here is a 445-residue protein sequence, read N- to C-terminus: C-terminal-binding protein 2 (445 aa).

At arginine 22 the chain carries Asymmetric dimethylarginine. Residues serine 106, isoleucine 186–threonine 191, aspartate 210, cysteine 243–asparagine 249, alanine 270–arginine 272, and aspartate 296 each bind NAD(+). Arginine 272 is an active-site residue. Glutamate 301 is an active-site residue. Catalysis depends on histidine 321, which acts as the Proton donor. Histidine 321 to tryptophan 324 contacts NAD(+). Residues threonine 414–glutamine 445 are disordered. A Phosphoserine modification is found at serine 428. Basic and acidic residues predominate over residues lysine 434 to glutamine 445.

It belongs to the D-isomer specific 2-hydroxyacid dehydrogenase family. In terms of assembly, interacts with the C-terminus of adenovirus E1A protein. Can form homodimers or heterodimers of CTBP1 and CTBP2. Interacts with HIPK2. Interacts with ZNF217, PNN, NRIP1 and WIZ. Interacts with PRDM16; represses white adipose tissue (WAT)-specific genes expression. Interacts with MCRIP1. In terms of tissue distribution, isoform 2 is specifically localized in synaptic ribbon (at protein level).

It is found in the nucleus. It localises to the synapse. Functionally, corepressor targeting diverse transcription regulators. Functions in brown adipose tissue (BAT) differentiation. Isoform 2 probably acts as a scaffold for specialized synapses. This chain is C-terminal-binding protein 2 (CTBP2), found in Bos taurus (Bovine).